We begin with the raw amino-acid sequence, 584 residues long: Probable lysosomal cobalamin transporter (584 aa).

The next 10 helical transmembrane spans lie at 8–28 (LIWI…STFV), 46–66 (IFTL…VALV), 93–113 (TVVY…IVPF), 144–164 (TLVF…VPVA), 189–209 (ALTF…VIYS), 313–333 (LLGG…MLLT), 350–370 (ILGK…AASV), 376–396 (VIFI…IATI), 421–441 (ATVM…MIVV), and 509–529 (GIVD…VLLI).

Belongs to the LIMR family. LMBRD1 subfamily.

Its subcellular location is the lysosome membrane. In terms of biological role, probable lysosomal cobalamin transporter. Required to export cobalamin from lysosomes allowing its conversion to cofactors. This chain is Probable lysosomal cobalamin transporter, found in Coccidioides immitis (strain RS) (Valley fever fungus).